A 217-amino-acid polypeptide reads, in one-letter code: Redox-sensing transcriptional repressor Rex (217 aa).

Positions Arg17–Phe56 form a DNA-binding region, H-T-H motif. An NAD(+)-binding site is contributed by Gly91–Gly96.

It belongs to the transcriptional regulatory Rex family. In terms of assembly, homodimer.

Its subcellular location is the cytoplasm. Functionally, modulates transcription in response to changes in cellular NADH/NAD(+) redox state. The chain is Redox-sensing transcriptional repressor Rex from Caldicellulosiruptor bescii (strain ATCC BAA-1888 / DSM 6725 / KCTC 15123 / Z-1320) (Anaerocellum thermophilum).